Here is a 680-residue protein sequence, read N- to C-terminus: Potassium-transporting ATPase ATP-binding subunit (680 aa).

4 consecutive transmembrane segments (helical) span residues 37 to 57, 69 to 89, 223 to 243, and 257 to 277; these read VIFV…LDVA, IAAW…VAEG, ILLS…WGLA, and ALLV…IGIA. The 4-aspartylphosphate intermediate role is filled by aspartate 307. Residues aspartate 344, glutamate 348, 375-382, and lysine 393 each bind ATP; that span reads FTAETRLS. Mg(2+) is bound by residues aspartate 516 and aspartate 520. 3 helical membrane-spanning segments follow: residues 586–606, 614–634, and 652–672; these read FAII…LNIM, AILS…PLAL, and LLVY…LIDL.

Belongs to the cation transport ATPase (P-type) (TC 3.A.3) family. Type IA subfamily. As to quaternary structure, the system is composed of three essential subunits: KdpA, KdpB and KdpC.

It localises to the cell inner membrane. It catalyses the reaction K(+)(out) + ATP + H2O = K(+)(in) + ADP + phosphate + H(+). Functionally, part of the high-affinity ATP-driven potassium transport (or Kdp) system, which catalyzes the hydrolysis of ATP coupled with the electrogenic transport of potassium into the cytoplasm. This subunit is responsible for energy coupling to the transport system and for the release of the potassium ions to the cytoplasm. This Rhizobium meliloti (strain 1021) (Ensifer meliloti) protein is Potassium-transporting ATPase ATP-binding subunit.